The following is a 138-amino-acid chain: MGARRLGRELALQMLYSRDYAAGEAAPLLELVLDESEPGAAAGRSFADDLVRGVLEHRQEIDTAITGASKNWSIGRMARVDLSILRMAMYELLFRSDIPKNVTINEAIEVAKKFGTEDSPAFINGILDEIASTLPDKG.

This sequence belongs to the NusB family.

Its function is as follows. Involved in transcription antitermination. Required for transcription of ribosomal RNA (rRNA) genes. Binds specifically to the boxA antiterminator sequence of the ribosomal RNA (rrn) operons. In Geobacter sulfurreducens (strain ATCC 51573 / DSM 12127 / PCA), this protein is Transcription antitermination protein NusB.